Reading from the N-terminus, the 153-residue chain is MQCPYCNADDTKVIDSRLAAEGAQVRRRRQCNQCQERFTTFEVVEVVMPRIIKSNGRIEPYDSQKLKRSIQLPLQKRPVTLDEQEAMISRIEKRIRQLGEREISSKGLGEVVMSELKELDDVAYVRFASVYRDFQDIEAFRQELQNIRPVDEQ.

A zinc finger lies at 3–34; the sequence is CPYCNADDTKVIDSRLAAEGAQVRRRRQCNQC. An ATP-cone domain is found at 49–139; sequence PRIIKSNGRI…VYRDFQDIEA (91 aa).

The protein belongs to the NrdR family. It depends on Zn(2+) as a cofactor.

Negatively regulates transcription of bacterial ribonucleotide reductase nrd genes and operons by binding to NrdR-boxes. This is Transcriptional repressor NrdR from Psychrobacter sp. (strain PRwf-1).